Reading from the N-terminus, the 173-residue chain is Nucleoside-triphosphatase THEP1 (173 aa).

ATP contacts are provided by residues 15 to 22 (GMPGVGKT) and 101 to 108 (LKIIDEIG).

It belongs to the THEP1 NTPase family.

The catalysed reaction is a ribonucleoside 5'-triphosphate + H2O = a ribonucleoside 5'-diphosphate + phosphate + H(+). In terms of biological role, has nucleotide phosphatase activity towards ATP, GTP, CTP, TTP and UTP. May hydrolyze nucleoside diphosphates with lower efficiency. The sequence is that of Nucleoside-triphosphatase THEP1 from Pyrobaculum aerophilum (strain ATCC 51768 / DSM 7523 / JCM 9630 / CIP 104966 / NBRC 100827 / IM2).